A 1562-amino-acid polypeptide reads, in one-letter code: NAC-alpha domain-containing protein 1 (1562 aa).

Residues 1 to 13 (MPGEAARAELLLP) show a composition bias toward low complexity. Disordered regions lie at residues 1-24 (MPGE…RTDL), 56-110 (FLPS…TEAP), 131-226 (SPRA…ADGD), 249-288 (SGWG…SSSW), 327-365 (TPLS…LQSL), 381-458 (RDDT…GAYL), 503-941 (TPQA…EPLA), and 953-1423 (GCAP…AMSK). Positions 195–208 (GDARDSEAELRDEL) are enriched in basic and acidic residues. Low complexity predominate over residues 275 to 287 (SSESSLSADSSSS). Acidic residues predominate over residues 331–340 (PEEEEEEAVA). Low complexity predominate over residues 385–397 (SAASSDSDSASYA). Polar residues-rich tracts occupy residues 449–458 (PQTSDRGAYL) and 550–564 (QEET…SPQN). Over residues 992–1007 (PAALDQVQQDDPQPAA) the composition is skewed to low complexity. The segment covering 1048–1074 (PGREACLEARAHTGDGAKPDSPQKETL) has biased composition (basic and acidic residues). Position 1068 is a phosphoserine (Ser-1068). Composition is skewed to low complexity over residues 1172 to 1182 (APTSAPTSQQP) and 1231 to 1241 (APGTLAGAALP). A compositionally biased stretch (acidic residues) spans 1254-1264 (PQEDSVEDEEP). 3 stretches are compositionally biased toward low complexity: residues 1265–1284 (PGSL…AAAV), 1298–1308 (SLSPHSPLLSP), and 1335–1344 (QSPAGPQGLS). Over residues 1348–1357 (QQEDEDSLEE) the composition is skewed to acidic residues. At Ser-1354 the chain carries Phosphoserine. The NAC-A/B domain maps to 1411-1476 (SRSEKKARKA…AKIEDLSQQV (66 aa)).

This sequence belongs to the NAC-alpha family.

It is found in the cytoplasm. The protein localises to the nucleus. In terms of biological role, may prevent inappropriate targeting of non-secretory polypeptides to the endoplasmic reticulum (ER). May bind to nascent polypeptide chains as they emerge from the ribosome and block their interaction with the signal recognition particle (SRP), which normally targets nascent secretory peptides to the ER. May also reduce the inherent affinity of ribosomes for protein translocation sites in the ER membrane (M sites). The polypeptide is NAC-alpha domain-containing protein 1 (NACAD) (Homo sapiens (Human)).